Here is a 188-residue protein sequence, read N- to C-terminus: E3 ubiquitin-protein ligase RNF183 (188 aa).

Topologically, residues 1-157 are cytoplasmic; the sequence is MAEQQGREPE…RECFRNPHFR (157 aa). An RING-type zinc finger spans residues 11–58; sequence CPVCWNPFNNTFHTPKVLDCCHSFCVECLAHISLVTPTRRRLLCPLCR. A helical; Anchor for type IV membrane protein membrane pass occupies residues 158 to 178; sequence IFAYMMAVILCGTVLFIFSIF. Over 179–188 the chain is Lumenal; that stretch reads CTRRFFWGVG.

In terms of assembly, interacts with FATE1. Interacts with SEC16A. Interacts with BCL2L1. In terms of processing, autoubiquitinated (in vitro).

It is found in the endoplasmic reticulum membrane. The protein resides in the endoplasmic reticulum. It localises to the golgi apparatus. Its subcellular location is the cis-Golgi network membrane. The protein localises to the lysosome. The enzyme catalyses S-ubiquitinyl-[E2 ubiquitin-conjugating enzyme]-L-cysteine + [acceptor protein]-L-lysine = [E2 ubiquitin-conjugating enzyme]-L-cysteine + N(6)-ubiquitinyl-[acceptor protein]-L-lysine.. Its pathway is protein modification; protein ubiquitination. Functionally, acts as an E3 ubiquitin ligase catalyzing the covalent attachment of ubiquitin moieties onto substrate proteins. Triggers apoptosis in response to prolonged ER stress by mediating the polyubiquitination and subsequent proteasomal degradation of BCL2L1. May collaborate with FATE1 to restrain BIK protein levels thus regulating apoptotic signaling. The sequence is that of E3 ubiquitin-protein ligase RNF183 (RNF183) from Bos taurus (Bovine).